Consider the following 109-residue polypeptide: uncharacterized protein (109 aa).

Positions 10-109 (APFEYTLSLI…WGMAQGGPHM (100 aa)) constitute an HTH hxlR-type domain.

This is an uncharacterized protein from Bacillus subtilis (strain 168).